A 102-amino-acid chain; its full sequence is Small ribosomal subunit protein uS10 (102 aa).

Belongs to the universal ribosomal protein uS10 family. Part of the 30S ribosomal subunit.

Involved in the binding of tRNA to the ribosomes. In Pelotomaculum thermopropionicum (strain DSM 13744 / JCM 10971 / SI), this protein is Small ribosomal subunit protein uS10.